The chain runs to 502 residues: MAIKAEEISALLRSQIENYESEMSVTDVGTVLQIGDGIALIHGLNDCMAGELVEFSNGVLGLAQNLEESNVGVVILGPYTEITEGDEVRRTGRIMEVPVGEELIGRVVNPLGQPIDGQGPINTTKTRPVEQKATGVMARKSVDEPLQTGIKAIDALVPIGRGQRELIIGDRQTGKTTIGIDTILNQKGLDTICIYVAIGQKDSTVRANVEKLRQAGALDYTIVVSASASEPSPLLYIAPYSGVTMGEEFMFNGKHVLIVYDDLTKQAAAYRELSLLLRRPPGREAYPGDVFYLHSRLLERAAKLNDDLGGGSITALPIIETQAGDISAYVPTNVISITDGQIFLQSDLFFSGVRPAINAGQSVSRVGGSAQIKAMKKVAGTLRLDLASYRELESFAQFGSDLDEFTARKLERGKRTVEVLKQDQNKPLPVENQVLIIYALTKGYLDDIPVEDITRFEDELNSWTKSNGSDLLNEIRETGGLPSDDKFEATINEFKKSFSKSE.

The disordered stretch occupies residues isoleucine 115 to threonine 134. Position 169 to 176 (glycine 169 to threonine 176) interacts with ATP.

This sequence belongs to the ATPase alpha/beta chains family. In terms of assembly, F-type ATPases have 2 components, CF(1) - the catalytic core - and CF(0) - the membrane proton channel. CF(1) has five subunits: alpha(3), beta(3), gamma(1), delta(1), epsilon(1). CF(0) has three main subunits: a(1), b(2) and c(9-12). The alpha and beta chains form an alternating ring which encloses part of the gamma chain. CF(1) is attached to CF(0) by a central stalk formed by the gamma and epsilon chains, while a peripheral stalk is formed by the delta and b chains.

The protein localises to the cell membrane. The enzyme catalyses ATP + H2O + 4 H(+)(in) = ADP + phosphate + 5 H(+)(out). Its function is as follows. Produces ATP from ADP in the presence of a proton gradient across the membrane. The alpha chain is a regulatory subunit. This chain is ATP synthase subunit alpha, found in Staphylococcus haemolyticus (strain JCSC1435).